The following is a 261-amino-acid chain: Ribosomal RNA small subunit methyltransferase J (261 aa).

S-adenosyl-L-methionine-binding positions include Glu-129 to Arg-130 and Asp-182.

Belongs to the methyltransferase superfamily. RsmJ family.

The protein resides in the cytoplasm. The catalysed reaction is guanosine(1516) in 16S rRNA + S-adenosyl-L-methionine = N(2)-methylguanosine(1516) in 16S rRNA + S-adenosyl-L-homocysteine + H(+). In terms of biological role, specifically methylates the guanosine in position 1516 of 16S rRNA. This chain is Ribosomal RNA small subunit methyltransferase J, found in Desulfotalea psychrophila (strain LSv54 / DSM 12343).